The primary structure comprises 353 residues: Photosystem II protein D1 (353 aa).

The residue at position 2 (Thr-2) is an N-acetylthreonine. Thr-2 bears the Phosphothreonine mark. 3 helical membrane passes run 29 to 46 (YIGWFGVLMIPTLLTATS), 118 to 133 (HFLLGVACYMGREWEL), and 142 to 156 (WIAVAYSAPVAAATA). His-118 serves as a coordination point for chlorophyll a. Position 126 (Tyr-126) interacts with pheophytin a. Positions 170 and 189 each coordinate [CaMn4O5] cluster. A helical membrane pass occupies residues 197-218 (FHMLGVAGVFGGSLFSAMHGSL). Residue His-198 participates in chlorophyll a binding. Residues His-215 and 264–265 (SF) contribute to the a quinone site. His-215 lines the Fe cation pocket. His-272 serves as a coordination point for Fe cation. Residues 274-288 (FLAAWPVVGIWFTAL) traverse the membrane as a helical segment. [CaMn4O5] cluster is bound by residues His-332, Glu-333, Asp-342, and Ala-344. Residues 345 to 353 (AVEAPSING) constitute a propeptide that is removed on maturation.

Belongs to the reaction center PufL/M/PsbA/D family. In terms of assembly, PSII is composed of 1 copy each of membrane proteins PsbA, PsbB, PsbC, PsbD, PsbE, PsbF, PsbH, PsbI, PsbJ, PsbK, PsbL, PsbM, PsbT, PsbX, PsbY, PsbZ, Psb30/Ycf12, at least 3 peripheral proteins of the oxygen-evolving complex and a large number of cofactors. It forms dimeric complexes. It depends on The D1/D2 heterodimer binds P680, chlorophylls that are the primary electron donor of PSII, and subsequent electron acceptors. It shares a non-heme iron and each subunit binds pheophytin, quinone, additional chlorophylls, carotenoids and lipids. D1 provides most of the ligands for the Mn4-Ca-O5 cluster of the oxygen-evolving complex (OEC). There is also a Cl(-1) ion associated with D1 and D2, which is required for oxygen evolution. The PSII complex binds additional chlorophylls, carotenoids and specific lipids. as a cofactor. Tyr-161 forms a radical intermediate that is referred to as redox-active TyrZ, YZ or Y-Z. In terms of processing, C-terminally processed by CTPA; processing is essential to allow assembly of the oxygen-evolving complex and thus photosynthetic growth.

Its subcellular location is the plastid. It localises to the chloroplast thylakoid membrane. The catalysed reaction is 2 a plastoquinone + 4 hnu + 2 H2O = 2 a plastoquinol + O2. In terms of biological role, photosystem II (PSII) is a light-driven water:plastoquinone oxidoreductase that uses light energy to abstract electrons from H(2)O, generating O(2) and a proton gradient subsequently used for ATP formation. It consists of a core antenna complex that captures photons, and an electron transfer chain that converts photonic excitation into a charge separation. The D1/D2 (PsbA/PsbD) reaction center heterodimer binds P680, the primary electron donor of PSII as well as several subsequent electron acceptors. This chain is Photosystem II protein D1, found in Illicium oligandrum (Star anise).